The following is a 303-amino-acid chain: Methionyl-tRNA formyltransferase (303 aa).

108-111 (SDLP) provides a ligand contact to (6S)-5,6,7,8-tetrahydrofolate.

The protein belongs to the Fmt family.

The enzyme catalyses L-methionyl-tRNA(fMet) + (6R)-10-formyltetrahydrofolate = N-formyl-L-methionyl-tRNA(fMet) + (6S)-5,6,7,8-tetrahydrofolate + H(+). Functionally, attaches a formyl group to the free amino group of methionyl-tRNA(fMet). The formyl group appears to play a dual role in the initiator identity of N-formylmethionyl-tRNA by promoting its recognition by IF2 and preventing the misappropriation of this tRNA by the elongation apparatus. This Rickettsia canadensis (strain McKiel) protein is Methionyl-tRNA formyltransferase.